Here is a 161-residue protein sequence, read N- to C-terminus: Eukaryotic translation initiation factor 5A-1 (161 aa).

Residues 1 to 12 show a composition bias toward basic and acidic residues; that stretch reads MSDEEHQFESKA. The segment at 1–21 is disordered; sequence MSDEEHQFESKADAGASKTYP. At Lys-52 the chain carries Hypusine.

Belongs to the eIF-5A family. Post-translationally, lys-52 undergoes hypusination, a unique post-translational modification that consists in the addition of a butylamino group from spermidine to lysine side chain, leading to the formation of the unusual amino acid hypusine. eIF-5As are the only known proteins to undergo this modification, which is essential for their function.

In terms of biological role, translation factor that promotes translation elongation and termination, particularly upon ribosome stalling at specific amino acid sequence contexts. Binds between the exit (E) and peptidyl (P) site of the ribosome and promotes rescue of stalled ribosome: specifically required for efficient translation of polyproline-containing peptides as well as other motifs that stall the ribosome. Acts as a ribosome quality control (RQC) cofactor by joining the RQC complex to facilitate peptidyl transfer during CAT tailing step. This Medicago sativa (Alfalfa) protein is Eukaryotic translation initiation factor 5A-1.